Here is a 267-residue protein sequence, read N- to C-terminus: MTQTQGPTASALTRRIIPCLDVTAGRVVKGVNFVNLTDAGDPVEIARRYNEQGADELTFLDITATSDGRDLILPIIEQVASQVFIPLTVGGGVRQVSDVQRLLNAGADKISINSAAISNPELVRAAADYHGSQCIVVAIDARRVSSEGEAARWEVFTHGGRRATGLDAVAWARRMAAYGAGEILLTSMDRDGTKSGFDLELTRTVSDAVPVPVIASGGVGNLEHLAEGVTTGRASAVLAASIFHFGQHTVRECKAFMAQRGIDVRLD.

Residues Asp21 and Asp140 contribute to the active site.

Belongs to the HisA/HisF family. In terms of assembly, heterodimer of HisH and HisF.

The protein resides in the cytoplasm. It carries out the reaction 5-[(5-phospho-1-deoxy-D-ribulos-1-ylimino)methylamino]-1-(5-phospho-beta-D-ribosyl)imidazole-4-carboxamide + L-glutamine = D-erythro-1-(imidazol-4-yl)glycerol 3-phosphate + 5-amino-1-(5-phospho-beta-D-ribosyl)imidazole-4-carboxamide + L-glutamate + H(+). It functions in the pathway amino-acid biosynthesis; L-histidine biosynthesis; L-histidine from 5-phospho-alpha-D-ribose 1-diphosphate: step 5/9. In terms of biological role, IGPS catalyzes the conversion of PRFAR and glutamine to IGP, AICAR and glutamate. The HisF subunit catalyzes the cyclization activity that produces IGP and AICAR from PRFAR using the ammonia provided by the HisH subunit. The polypeptide is Imidazole glycerol phosphate synthase subunit HisF (Bordetella avium (strain 197N)).